The sequence spans 387 residues: MACAGPASGRHGVSMQEHMAIDVSPGPIRPIRLISNYFPHFYPFLEPVLRAPDRQAMLAPAIPSAPQLQPNPEPEGDSDDSTALGTLEFTLLFDEDNSALHCTAHRAKGLKPPAAGSVDTYVKANLLPGASKASQLRTRTVRGTREPVWEETLTYHGFTCQDAGRKTLRLCVCEDSRLRRRRRGPPLGELRVPLRKLVPNRARSFDICLEKRKLTKRPKSLDTARGMSLYEEEEVEAEVFGEERGRILLSLCYSSERGGLLVGVLRCVHLAPMDANGYSDPFVRLFLHPSSGKKSKYKTSVRRKTLNPEFNEEFFYAGHREELAQKALLVSVWDYDLGTADDFIGGVQLSGRASGERLRHWRECLGHCDHRLELWHLLDSVPPQLGD.

C2 domains lie at 83–209 and 243–376; these read ALGT…DICL and ERGR…ELWH. Positions 274, 280, 334, 336, and 342 each coordinate Ca(2+).

The cofactor is Ca(2+).

Its function is as follows. May be involved in regulation of vesicular trafficking. In vitro, does not bind calcium and phospholipids. This chain is Double C2-like domain-containing protein gamma (Doc2g), found in Mus musculus (Mouse).